A 66-amino-acid chain; its full sequence is Type 3 secretion system chaperone YscE (66 aa).

Belongs to the YscE family. In terms of assembly, component of the heterodimeric YscE-YscG chaperone. The YscE-YscG chaperone forms a stable ternary complex with YscF/SctF.

Its subcellular location is the cytoplasm. Functionally, chaperone of the type III secretion system (T3SS), also called injectisome, which is used to inject bacterial effector proteins into eukaryotic host cells. Along with YscG, prevents premature polymerization of the YscF/SctF needle protein within the cytoplasm. Required for Yop secretion. The protein is Type 3 secretion system chaperone YscE of Yersinia enterocolitica.